The sequence spans 376 residues: Actin, cytoplasmic (376 aa).

The protein belongs to the actin family.

It localises to the cytoplasm. Its subcellular location is the cytoskeleton. The enzyme catalyses ATP + H2O = ADP + phosphate + H(+). Functionally, actins are highly conserved proteins that are involved in various types of cell motility and are ubiquitously expressed in all eukaryotic cells. This Tetrahymena pyriformis protein is Actin, cytoplasmic.